Here is a 751-residue protein sequence, read N- to C-terminus: MTNVLNLLNEIGIEELRPPQKKVIEEGLLDKSKNFLICIPTASGKTLIGEMALLNHVLDENYNLTGKKGLFIVPLKALASEKFDEFQKKYETYGIKVGMSIGDYDTKEDLSKYNIIITTSEKLDSLMRHNIEWIKDLSLAVIDEIHLIGDNERGGTLEVILTKLKNINAQIVGLSATVGNPEEIANWLNAKLVTDEWRPVELKKGIYLENEINYINNQDSQKKSFKAVKSISRNNLTDLIVDSVNEKGSCLIFCNSKRNAVGESKKHNLTKYLSKAELNDLNSISEEILSILETPTETCKSLSECIKKGVAFHHAGLTYQHRKAVEEGFRNKVIKVICCTPTLSAGLNLPCRRAIIRDIRRYSQNGLIDIPKLEIHQCIGRAGRPGLDPYGEGIILAKNEKDVEKAFLALTGPLENIYSKLSNQKVLRVHILGLIATLEIKSTSELINFIKNTFYAHQYGNLHGVLTNVSKVVEFLEKNKFIETLDDDFTPKKNRVLELTLDNSNNLVLDSKRRMDTLTNLSFKPTNLGKRVSELYIDPLSSEIIIEGLNELKEKINDMDRSNIDQYIFYIISKATEMRPLLRVKMDEELELIQEMDKLKISDYSIENIEAFKNSKMFLDWINETPEEVILEKYGIEPGILRYKVDQARWMTYSSKEIAKLVKLNNDKIYKALLEMEFRIEYGAKEELIELLKIKNIGRVRARRLFNIGIKSKMDILKNPEKIISTFGDKVGKKILDEFGLKYGQQKLSGF.

Residues Gln20 and 39–46 contribute to the ATP site; that span reads IPTASGKT. Residues 26–196 enclose the Helicase ATP-binding domain; it reads EGLLDKSKNF…WLNAKLVTDE (171 aa). A DEAH box motif is present at residues 143-146; the sequence is DEIH. The Helicase C-terminal domain maps to 235-435; the sequence is NLTDLIVDSV…VLRVHILGLI (201 aa).

It belongs to the helicase family. Hel308 subfamily. Monomer.

It catalyses the reaction Couples ATP hydrolysis with the unwinding of duplex DNA by translocating in the 3'-5' direction.. The catalysed reaction is ATP + H2O = ADP + phosphate + H(+). DNA-dependent ATPase and 3'-5' DNA helicase that may be involved in repair of stalled replication forks. The polypeptide is ATP-dependent DNA helicase Hel308 (Methanococcus vannielii (strain ATCC 35089 / DSM 1224 / JCM 13029 / OCM 148 / SB)).